Consider the following 216-residue polypeptide: MFDISSSNLLISVLVVLFAKQLINAVGKATLENIGWSAYCKVAPKLGDSKFIALDQKNVELAKVSKERKSISAQDQYARWTKLNRQFDKLTGEINKLKEETSASRSYISKYIGYMILVTTTLPIWFFRVWFRKAVLFYFPTGVLPHYLEWFLALPFITTGGVGLTIWMSAVNNVVSSVIFLVKFPFEKEVPFPSKEVGNEKTSINKEEVSGTPAAN.

The Lumenal segment spans residues 1–9 (MFDISSSNL). The helical transmembrane segment at 10–29 (LISVLVVLFAKQLINAVGKA) threads the bilayer. Over 30 to 116 (TLENIGWSAY…YISKYIGYMI (87 aa)) the chain is Cytoplasmic. Positions 54-105 (LDQKNVELAKVSKERKSISAQDQYARWTKLNRQFDKLTGEINKLKEETSASR) form a coiled coil. Residues 117-137 (LVTTTLPIWFFRVWFRKAVLF) form a helical membrane-spanning segment. The Lumenal segment spans residues 138-161 (YFPTGVLPHYLEWFLALPFITTGG). A helical transmembrane segment spans residues 162–178 (VGLTIWMSAVNNVVSSV). The Cytoplasmic portion of the chain corresponds to 179 to 216 (IFLVKFPFEKEVPFPSKEVGNEKTSINKEEVSGTPAAN). The disordered stretch occupies residues 193-216 (PSKEVGNEKTSINKEEVSGTPAAN). Residues 197–209 (VGNEKTSINKEEV) are compositionally biased toward basic and acidic residues.

This sequence belongs to the WRB/GET1 family. In terms of assembly, component of the Golgi to ER traffic (GET) complex, which is composed of GET1, GET2 and GET3. Within the complex, GET1 and GET2 form a heterotetramer which is stabilized by phosphatidylinositol binding and which binds to the GET3 homodimer.

It localises to the endoplasmic reticulum membrane. The protein localises to the golgi apparatus membrane. In terms of biological role, required for the post-translational delivery of tail-anchored (TA) proteins to the endoplasmic reticulum. Together with GET2, acts as a membrane receptor for soluble GET3, which recognizes and selectively binds the transmembrane domain of TA proteins in the cytosol. The GET complex cooperates with the HDEL receptor ERD2 to mediate the ATP-dependent retrieval of resident ER proteins that contain a C-terminal H-D-E-L retention signal from the Golgi to the ER. The protein is Golgi to ER traffic protein 1 of Debaryomyces hansenii (strain ATCC 36239 / CBS 767 / BCRC 21394 / JCM 1990 / NBRC 0083 / IGC 2968) (Yeast).